We begin with the raw amino-acid sequence, 152 residues long: Lipoprotein signal peptidase (152 aa).

3 helical membrane passes run 33–53 (VVPP…FGLL), 58–78 (MLFV…YFKI), and 83–102 (PVLD…NLAD). Residues Asp-111 and Asp-125 contribute to the active site. A helical membrane pass occupies residues 120 to 140 (VFNLADTAIVTGAFLLAWALL).

Belongs to the peptidase A8 family.

Its subcellular location is the cell membrane. The catalysed reaction is Release of signal peptides from bacterial membrane prolipoproteins. Hydrolyzes -Xaa-Yaa-Zaa-|-(S,diacylglyceryl)Cys-, in which Xaa is hydrophobic (preferably Leu), and Yaa (Ala or Ser) and Zaa (Gly or Ala) have small, neutral side chains.. It functions in the pathway protein modification; lipoprotein biosynthesis (signal peptide cleavage). This protein specifically catalyzes the removal of signal peptides from prolipoproteins. In Pelotomaculum thermopropionicum (strain DSM 13744 / JCM 10971 / SI), this protein is Lipoprotein signal peptidase.